We begin with the raw amino-acid sequence, 143 residues long: Large ribosomal subunit protein uL11 (143 aa).

It belongs to the universal ribosomal protein uL11 family. In terms of assembly, part of the ribosomal stalk of the 50S ribosomal subunit. Interacts with L10 and the large rRNA to form the base of the stalk. L10 forms an elongated spine to which L12 dimers bind in a sequential fashion forming a multimeric L10(L12)X complex. Post-translationally, one or more lysine residues are methylated.

Forms part of the ribosomal stalk which helps the ribosome interact with GTP-bound translation factors. This is Large ribosomal subunit protein uL11 from Clavibacter sepedonicus (Clavibacter michiganensis subsp. sepedonicus).